The primary structure comprises 237 residues: Purine nucleoside phosphorylase DeoD-type (237 aa).

Position 4 (histidine 4) interacts with a purine D-ribonucleoside. Residues glycine 20, arginine 24, arginine 43, and 87 to 90 each bind phosphate; that span reads RVGT. Residues 180–182 and 204–205 each bind a purine D-ribonucleoside; these read EME and SD. Aspartate 205 (proton donor) is an active-site residue.

Belongs to the PNP/UDP phosphorylase family. In terms of assembly, homohexamer; trimer of homodimers.

It carries out the reaction a purine D-ribonucleoside + phosphate = a purine nucleobase + alpha-D-ribose 1-phosphate. It catalyses the reaction a purine 2'-deoxy-D-ribonucleoside + phosphate = a purine nucleobase + 2-deoxy-alpha-D-ribose 1-phosphate. Catalyzes the reversible phosphorolytic breakdown of the N-glycosidic bond in the beta-(deoxy)ribonucleoside molecules, with the formation of the corresponding free purine bases and pentose-1-phosphate. The sequence is that of Purine nucleoside phosphorylase DeoD-type from Streptococcus suis (strain 98HAH33).